The following is an 896-amino-acid chain: Probable sodium/sulfate cotransporter 3 (896 aa).

5 consecutive transmembrane segments (helical) span residues Met-1–Ile-21, Ile-47–Tyr-69, Val-106–Leu-126, Leu-140–Ser-160, and Met-186–Leu-206. RCK C-terminal domains follow at residues Leu-212–Leu-296, Thr-319–Asn-404, Leu-408–Leu-493, and Glu-499–Val-586. Transmembrane regions (helical) follow at residues Met-602 to Lys-622, Tyr-626 to Met-646, Ala-654 to Glu-674, Ala-685 to Val-705, Leu-734 to Ile-754, Phe-776 to Cys-796, and Val-804 to Leu-824. A disordered region spans residues Arg-857–Pro-881. Positions Val-868–Pro-881 are enriched in polar residues.

The protein belongs to the divalent anion:Na+ symporter (DASS) superfamily. Na+/sulfate symporter (TC 2.A.47.4) family.

The protein localises to the cell membrane. In terms of biological role, na(+)/sulfate cotransporter with a probable low-affinity for sulfate. The polypeptide is Probable sodium/sulfate cotransporter 3 (SLT3) (Chlamydomonas reinhardtii (Chlamydomonas smithii)).